We begin with the raw amino-acid sequence, 766 residues long: 5-methyltetrahydropteroyltriglutamate--homocysteine methyltransferase (766 aa).

Residues 16–19 (RELK) and lysine 117 contribute to the 5-methyltetrahydropteroyltri-L-glutamate site. Residues 442-444 (IGS) and glutamate 495 each bind L-homocysteine. Residues 442 to 444 (IGS) and glutamate 495 each bind L-methionine. 5-methyltetrahydropteroyltri-L-glutamate contacts are provided by residues 526–527 (RC) and tryptophan 572. Position 610 (aspartate 610) interacts with L-homocysteine. Aspartate 610 serves as a coordination point for L-methionine. Glutamate 616 contacts 5-methyltetrahydropteroyltri-L-glutamate. Zn(2+)-binding residues include histidine 652, cysteine 654, and glutamate 676. Residue histidine 705 is the Proton donor of the active site. Cysteine 737 is a Zn(2+) binding site.

The protein belongs to the vitamin-B12 independent methionine synthase family. Requires Zn(2+) as cofactor.

The catalysed reaction is 5-methyltetrahydropteroyltri-L-glutamate + L-homocysteine = tetrahydropteroyltri-L-glutamate + L-methionine. It participates in amino-acid biosynthesis; L-methionine biosynthesis via de novo pathway; L-methionine from L-homocysteine (MetE route): step 1/1. Functionally, catalyzes the transfer of a methyl group from 5-methyltetrahydrofolate to homocysteine resulting in methionine formation. This chain is 5-methyltetrahydropteroyltriglutamate--homocysteine methyltransferase, found in Bordetella avium (strain 197N).